Here is a 250-residue protein sequence, read N- to C-terminus: Proteasome subunit alpha (250 aa).

The protein belongs to the peptidase T1A family. In terms of assembly, the 20S proteasome core is composed of 14 alpha and 14 beta subunits that assemble into four stacked heptameric rings, resulting in a barrel-shaped structure. The two inner rings, each composed of seven catalytic beta subunits, are sandwiched by two outer rings, each composed of seven alpha subunits. The catalytic chamber with the active sites is on the inside of the barrel. Has a gated structure, the ends of the cylinder being occluded by the N-termini of the alpha-subunits. Is capped at one or both ends by the proteasome regulatory ATPase, PAN.

Its subcellular location is the cytoplasm. With respect to regulation, the formation of the proteasomal ATPase PAN-20S proteasome complex, via the docking of the C-termini of PAN into the intersubunit pockets in the alpha-rings, triggers opening of the gate for substrate entry. Interconversion between the open-gate and close-gate conformations leads to a dynamic regulation of the 20S proteasome proteolysis activity. In terms of biological role, component of the proteasome core, a large protease complex with broad specificity involved in protein degradation. This Haloquadratum walsbyi (strain DSM 16790 / HBSQ001) protein is Proteasome subunit alpha.